The following is a 566-amino-acid chain: Berberine bridge enzyme-like D-2 (566 aa).

An N-terminal signal peptide occupies residues 1–33 (MKRNISMSLQRLLIILMMISFLFTSLLVPSVSA). C42 and C103 are oxidised to a cystine. An N-linked (GlcNAc...) asparagine glycan is attached at N50. Residues 81–257 (SKPKPTVIIV…YAWKIRLLKV (177 aa)) enclose the FAD-binding PCMH-type domain. H118 bears the Pros-8alpha-FAD histidine mark. Residues N364, N378, and N503 are each glycosylated (N-linked (GlcNAc...) asparagine).

The protein belongs to the oxygen-dependent FAD-linked oxidoreductase family. The cofactor is FAD.

Its subcellular location is the vacuole. Its pathway is alkaloid biosynthesis; nicotine biosynthesis. In terms of biological role, involved in the biosynthesis of pyridine alkaloid natural products, leading mainly to the production of anabasine, anatabine, nicotine and nornicotine, effective deterrents against herbivores with antiparasitic and pesticide properties (neurotoxins); nornicotine serves as the precursor in the synthesis of the carcinogen compound N'-nitrosonornicotine (NNN). Catalyzes a late oxidation step subsequent to the pyridine ring condensation reaction in the biosynthesis of alkaloids. In Nicotiana tabacum (Common tobacco), this protein is Berberine bridge enzyme-like D-2.